Here is a 155-residue protein sequence, read N- to C-terminus: Small ribosomal subunit protein uS7c (155 aa).

This sequence belongs to the universal ribosomal protein uS7 family. In terms of assembly, part of the 30S ribosomal subunit.

The protein resides in the plastid. It is found in the chloroplast. Functionally, one of the primary rRNA binding proteins, it binds directly to 16S rRNA where it nucleates assembly of the head domain of the 30S subunit. This chain is Small ribosomal subunit protein uS7c (rps7), found in Pinus thunbergii (Japanese black pine).